The following is a 515-amino-acid chain: MAVVRVRAIVALLCLVAALGLAEPLEEEDGVLVLRAANFEQALAAHRHLLVEFYAPWCGHCKALAPEYAKAAAQLKAEGSEIRLAKVDATEEAELAQQFGVRGYPTIKFFRNGDKAAPREYTAGREADDIVSWLKKRTGPAATTLTDAAAAETLVDSSEVVVIGFFKDVTSDAAKEFLLAAESVDDIPFGISSSADVFSKYQLSQDGVVLFKKFDEGRNNFEGDLTKDNLLNFIKSNQLPLVIEFTEQTAPKIFGGEIKTHILLFLPKSVSDYEGKLDNFKTAAGNFKGKILFIFIDSDHSDNQRILEFFGLKKEECPAVRLITLEEEMTKYKPESDDLTADKIKEFCNKFLEGKIKPHLMSQDLPEDWDKQPVKVLVGKNFEEVAFDENKNVFVEFYAPWCGHCKQLAPIWDKLGETYRDHENIVIAKMDSTANEVEAVKIHSFPTLKFFPAGSGRNVIDYNGERTLEGFKKFLESGGQDGAAADDDLEDLETDEETDLEEGDDDEQKIQKDEL.

Positions 1–22 (MAVVRVRAIVALLCLVAALGLA) are cleaved as a signal peptide. Thioredoxin domains are found at residues 23 to 139 (EPLE…KRTG) and 351 to 480 (FLEG…SGGQ). Catalysis depends on nucleophile residues Cys58, Cys61, Cys402, and Cys405. Cystine bridges form between Cys58–Cys61 and Cys402–Cys405. The tract at residues 477–515 (SGGQDGAAADDDLEDLETDEETDLEEGDDDEQKIQKDEL) is disordered. Acidic residues predominate over residues 484 to 507 (AADDDLEDLETDEETDLEEGDDDE). Positions 512–515 (KDEL) match the Prevents secretion from ER motif.

The protein belongs to the protein disulfide isomerase family. Heterodimer; heterodimerizes with the protein microsomal triglyceride transfer MTTP. Homodimer. Monomers and homotetramers may also occur. Also constitutes the structural subunit of prolyl 4-hydroxylase. Stabilizes this enzyme and retains it in the ER without contributing to the catalytic activity. Binds UBQLN1.

Its subcellular location is the endoplasmic reticulum. It localises to the endoplasmic reticulum lumen. The protein resides in the cell membrane. The enzyme catalyses Catalyzes the rearrangement of -S-S- bonds in proteins.. Functionally, this multifunctional protein catalyzes the formation, breakage and rearrangement of disulfide bonds. At the cell surface, seems to act as a reductase that cleaves disulfide bonds of proteins attached to the cell. May therefore cause structural modifications of exofacial proteins. Inside the cell, seems to form/rearrange disulfide bonds of nascent proteins. At high concentrations, functions as a chaperone that inhibits aggregation of misfolded proteins. At low concentrations, facilitates aggregation (anti-chaperone activity). Also acts a structural subunit of various enzymes such as prolyl 4-hydroxylase. In Gallus gallus (Chicken), this protein is Protein disulfide-isomerase (P4HB).